We begin with the raw amino-acid sequence, 213 residues long: Thymidylate kinase (213 aa).

10–17 (GLEGAGKT) is a binding site for ATP.

This sequence belongs to the thymidylate kinase family.

The catalysed reaction is dTMP + ATP = dTDP + ADP. Its function is as follows. Phosphorylation of dTMP to form dTDP in both de novo and salvage pathways of dTTP synthesis. In Escherichia coli O81 (strain ED1a), this protein is Thymidylate kinase.